A 788-amino-acid polypeptide reads, in one-letter code: Probable potassium transporter 9 (788 aa).

The Cytoplasmic portion of the chain corresponds to 1–21; that stretch reads MDPEFGRGMAPRKREPWRTTL. The helical transmembrane segment at 22-42 threads the bilayer; sequence LLAYQSLGVVYGDLSISPLYV. At 43–59 the chain is on the extracellular side; sequence YKSTFAEDITHSESNEE. The chain crosses the membrane as a helical span at residues 60–80; sequence IFGVLSFVFWTLTLIPLIKYV. The Cytoplasmic segment spans residues 81–151; that stretch reads SIVLRADDNG…EKHKTLQTAL (71 aa). A helical membrane pass occupies residues 152–172; that stretch reads LIMVMIGTCMVIGDGVLTPAI. Over 173-191 the chain is Extracellular; that stretch reads SVFSAVSGLELSLSRDQHE. Residues 192-212 form a helical membrane-spanning segment; it reads YAVIPITCVILVFLFALQHYG. Topologically, residues 213 to 215 are cytoplasmic; it reads THR. A helical transmembrane segment spans residues 216–236; it reads VGFLFAPIVLAWLICMSMLGL. Residues 237-264 lie on the Extracellular side of the membrane; that stretch reads YNIIHWNPQVYRALNPYYMLKFLRKTKK. Residues 265–285 form a helical membrane-spanning segment; that stretch reads SGWMSLGGILLCMTGSEAMFA. Residues 286-292 lie on the Cytoplasmic side of the membrane; the sequence is DLGHFSY. A helical transmembrane segment spans residues 293 to 313; it reads SAIQLAFTTLVYPALILGYMG. Residues 314–343 lie on the Extracellular side of the membrane; sequence QAAYLSKHHTLNSTYQIGYYISVPESVRWP. N325 carries an N-linked (GlcNAc...) asparagine glycan. The helical transmembrane segment at 344–364 threads the bilayer; it reads VLVLAILASVVGSQAIISGTF. The Cytoplasmic segment spans residues 365–391; sequence SIINQSQSLSCFPRVKVVHTSENIHGQ. Residues 392–412 form a helical membrane-spanning segment; it reads IYIPEINWLLMVLCIAVTVGF. The Extracellular portion of the chain corresponds to 413–422; that stretch reads RDTKHMGNAS. N-linked (GlcNAc...) asparagine glycosylation occurs at N420. A helical membrane pass occupies residues 423–443; sequence GLAVITVMLVTTCLTSLVIML. The Cytoplasmic segment spans residues 444–451; it reads CWHRSPAL. Residues 452-472 form a helical membrane-spanning segment; sequence ALVFFLFFGSIEVLYFSASLI. The Extracellular segment spans residues 473-476; it reads KFRE. Residues 477–497 form a helical membrane-spanning segment; that stretch reads GAWLPIMLALILMAVMFIWHH. The Cytoplasmic portion of the chain corresponds to 498 to 788; that stretch reads TTIKKYEFDL…LLEVGMVYVL (291 aa).

It belongs to the HAK/KUP transporter (TC 2.A.72.3) family.

The protein localises to the membrane. In terms of biological role, high-affinity potassium transporter. In Oryza sativa subsp. japonica (Rice), this protein is Probable potassium transporter 9 (HAK9).